We begin with the raw amino-acid sequence, 538 residues long: L-aspartate oxidase (538 aa).

FAD-binding positions include Ser14 to Ala17, Lys36, Ser43 to Gly50, and Asp223. Arg290 serves as the catalytic Proton donor/acceptor. Residues Glu375 and Ser391–Leu392 each bind FAD.

The protein belongs to the FAD-dependent oxidoreductase 2 family. NadB subfamily. FAD serves as cofactor.

The protein localises to the cytoplasm. The catalysed reaction is L-aspartate + O2 = iminosuccinate + H2O2. Its pathway is cofactor biosynthesis; NAD(+) biosynthesis; iminoaspartate from L-aspartate (oxidase route): step 1/1. Its function is as follows. Catalyzes the oxidation of L-aspartate to iminoaspartate, the first step in the de novo biosynthesis of NAD(+). This is L-aspartate oxidase (nadB) from Pseudomonas aeruginosa (strain ATCC 15692 / DSM 22644 / CIP 104116 / JCM 14847 / LMG 12228 / 1C / PRS 101 / PAO1).